Here is a 249-residue protein sequence, read N- to C-terminus: tRNA (guanine-N(1)-)-methyltransferase (249 aa).

S-adenosyl-L-methionine contacts are provided by residues Gly-118 and 138-143 (IGDYVL).

It belongs to the RNA methyltransferase TrmD family. In terms of assembly, homodimer.

The protein resides in the cytoplasm. The catalysed reaction is guanosine(37) in tRNA + S-adenosyl-L-methionine = N(1)-methylguanosine(37) in tRNA + S-adenosyl-L-homocysteine + H(+). Its function is as follows. Specifically methylates guanosine-37 in various tRNAs. This Alkaliphilus oremlandii (strain OhILAs) (Clostridium oremlandii (strain OhILAs)) protein is tRNA (guanine-N(1)-)-methyltransferase.